A 110-amino-acid polypeptide reads, in one-letter code: UPF0235 protein Mpop_2087 (110 aa).

It belongs to the UPF0235 family.

This is UPF0235 protein Mpop_2087 from Methylorubrum populi (strain ATCC BAA-705 / NCIMB 13946 / BJ001) (Methylobacterium populi).